The sequence spans 115 residues: Macrophage migration inhibitory factor homolog (115 aa).

Residue Pro2 is the Proton acceptor; via imino nitrogen of the active site. Positions 33 and 65 each coordinate substrate.

Belongs to the MIF family.

Its subcellular location is the secreted. It carries out the reaction L-dopachrome = 5,6-dihydroxyindole-2-carboxylate. The catalysed reaction is 3-phenylpyruvate = enol-phenylpyruvate. Tautomerization of the methyl ester of L-dopachrome. Inhibits migration of human peripheral blood mononuclear cells. The protein is Macrophage migration inhibitory factor homolog of Brugia malayi (Filarial nematode worm).